The sequence spans 340 residues: Mitochondrial amidoxime-reducing component 1 (340 aa).

A lipid anchor (N-myristoyl glycine) is attached at G2. Residues 2 to 24 (GAGSWALTLFGFSAFRVPGQPRS) are Mitochondrial matrix-facing. A helical; Signal-anchor for type II membrane protein transmembrane segment spans residues 25–44 (TWLGVAALGLAAVALGTVAW). At 45-340 (RRARPRRRRR…VGDPVYLLGQ (296 aa)) the chain is on the cytoplasmic side. K70, S71, and R95 together coordinate Mo-molybdopterin. An MOSC N-terminal region region spans residues 96–186 (FWLVINEEGN…KMQSCRLVHF (91 aa)). One can recognise an MOSC domain in the interval 191-338 (RPRSSRQMKA…IRVGDPVYLL (148 aa)). The Mo-molybdopterin site is built by S214, R241, N243, T274, R275, C276, and Y320.

Component of a complex composed of cytochrome b5, NADH-cytochrome b5 reductase and MTARC1. The cofactor is Mo-molybdopterin.

It localises to the mitochondrion outer membrane. It is found in the membrane. It carries out the reaction N(omega)-hydroxy-L-arginine + 2 Fe(II)-[cytochrome b5] + 2 H(+) = L-arginine + 2 Fe(III)-[cytochrome b5] + H2O. Catalyzes the reduction of N-oxygenated molecules, acting as a counterpart of cytochrome P450 and flavin-containing monooxygenases in metabolic cycles. As a component of prodrug-converting system, reduces a multitude of N-hydroxylated prodrugs particularly amidoximes, leading to increased drug bioavailability. May be involved in mitochondrial N(omega)-hydroxy-L-arginine (NOHA) reduction, regulating endogenous nitric oxide levels and biosynthesis. Postulated to cleave the N-OH bond of N-hydroxylated substrates in concert with electron transfer from NADH to cytochrome b5 reductase then to cytochrome b5, the ultimate electron donor that primes the active site for substrate reduction. This chain is Mitochondrial amidoxime-reducing component 1 (Mtarc1), found in Mus musculus (Mouse).